Reading from the N-terminus, the 803-residue chain is Translation initiation factor IF-2 (803 aa).

Disordered stretches follow at residues 95–125 and 138–178; these read PVVE…EKAE and EVKE…EREE. Residues 111 to 121 are compositionally biased toward polar residues; the sequence is VPLTSDTTNLN. The segment covering 138–155 has biased composition (basic and acidic residues); that stretch reads EVKEEAKKTPSEKKETPK. Basic residues predominate over residues 156-167; the sequence is KGPRKETRRSRK. A compositionally biased stretch (basic and acidic residues) spans 168 to 178; sequence PDKEDKWEREE. The tr-type G domain maps to 302–471; that stretch reads PRAPVVTIMG…LLQAEVLELK (170 aa). Residues 311–318 form a G1 region; it reads GHVDHGKT. 311–318 lines the GTP pocket; sequence GHVDHGKT. Residues 336 to 340 form a G2 region; it reads GITQH. The G3 stretch occupies residues 357 to 360; that stretch reads DTPG. GTP contacts are provided by residues 357–361 and 411–414; these read DTPGH and NKID. Positions 411 to 414 are G4; sequence NKID. Residues 447–449 are G5; that stretch reads SAK.

This sequence belongs to the TRAFAC class translation factor GTPase superfamily. Classic translation factor GTPase family. IF-2 subfamily.

It localises to the cytoplasm. Its function is as follows. One of the essential components for the initiation of protein synthesis. Protects formylmethionyl-tRNA from spontaneous hydrolysis and promotes its binding to the 30S ribosomal subunits. Also involved in the hydrolysis of GTP during the formation of the 70S ribosomal complex. The polypeptide is Translation initiation factor IF-2 (Coxiella burnetii (strain RSA 331 / Henzerling II)).